An 873-amino-acid polypeptide reads, in one-letter code: DNA helicase/primase complex-associated protein (873 aa).

Residues 394–422 (PPLPRDDGDGENNVVEVSSSTGGAHPPSD) are disordered.

This sequence belongs to the herpesviridae HEPA family. In terms of assembly, associates with the primase and the helicase to form the helicase-primase complex. Interacts with the origin-binding protein. Interacts with the polymerase catalytic subunit.

The protein resides in the host nucleus. Component of the helicase/primase complex. Unwinds the DNA at the replication forks and generates single-stranded DNA for both leading and lagging strand synthesis. The primase synthesizes short RNA primers on the lagging strand that the polymerase presumably elongates using dNTPs. The primase-associated factor has no known catalytic activity in the complex and may serve to facilitate the formation of the replisome by directly interacting with the origin-binding protein and the polymerase. This is DNA helicase/primase complex-associated protein (UL102) from Homo sapiens (Human).